The following is a 212-amino-acid chain: MTTQKIVPTKSTDGSKLFRHQAKFVAGAMNINQIPNFSLPEIAFVGKSNVGKSSLINTICNNKNLAKVSNTAGRTRQINFFNLADKLIIVDLPGYGFANVPISVKEQWGVLISYYLRNSYNLRLVNLLIDSRRGIKENDKKVADLLLANKREFQIIFTKSDKVTDHKNLHDEAHNFLATLNYSCNVMYVSNRSKEGARELKASLAKCIKPQK.

The 173-residue stretch at 38–210 (SLPEIAFVGK…KASLAKCIKP (173 aa)) folds into the EngB-type G domain. GTP is bound by residues 46–53 (GKSNVGKS), 73–77 (GRTRQ), 91–94 (DLPG), 158–161 (TKSD), and 189–191 (VSN). Mg(2+) is bound by residues serine 53 and threonine 75.

This sequence belongs to the TRAFAC class TrmE-Era-EngA-EngB-Septin-like GTPase superfamily. EngB GTPase family. Mg(2+) serves as cofactor.

In terms of biological role, necessary for normal cell division and for the maintenance of normal septation. The chain is Probable GTP-binding protein EngB from Rickettsia peacockii (strain Rustic).